The chain runs to 914 residues: Isoleucine--tRNA ligase (914 aa).

The 'HIGH' region signature appears at 57–67 (PYANGQIHMGH). Glutamate 554 is a binding site for L-isoleucyl-5'-AMP. The short motif at 595–599 (KMSKS) is the 'KMSKS' region element. Residue lysine 598 coordinates ATP. Zn(2+) is bound by residues cysteine 883, cysteine 886, cysteine 904, and cysteine 907.

Belongs to the class-I aminoacyl-tRNA synthetase family. IleS type 1 subfamily. Monomer. Requires Zn(2+) as cofactor.

The protein resides in the cytoplasm. It catalyses the reaction tRNA(Ile) + L-isoleucine + ATP = L-isoleucyl-tRNA(Ile) + AMP + diphosphate. Catalyzes the attachment of isoleucine to tRNA(Ile). As IleRS can inadvertently accommodate and process structurally similar amino acids such as valine, to avoid such errors it has two additional distinct tRNA(Ile)-dependent editing activities. One activity is designated as 'pretransfer' editing and involves the hydrolysis of activated Val-AMP. The other activity is designated 'posttransfer' editing and involves deacylation of mischarged Val-tRNA(Ile). The polypeptide is Isoleucine--tRNA ligase (Macrococcus caseolyticus (strain JCSC5402) (Macrococcoides caseolyticum)).